The chain runs to 181 residues: Shikimate kinase (181 aa).

Glycine 17–threonine 22 lines the ATP pocket. Threonine 21 contacts Mg(2+). The substrate site is built by aspartate 39, arginine 63, and glycine 85. Position 122 (arginine 122) interacts with ATP. Arginine 141 contributes to the substrate binding site.

This sequence belongs to the shikimate kinase family. As to quaternary structure, monomer. Requires Mg(2+) as cofactor.

It is found in the cytoplasm. The catalysed reaction is shikimate + ATP = 3-phosphoshikimate + ADP + H(+). The protein operates within metabolic intermediate biosynthesis; chorismate biosynthesis; chorismate from D-erythrose 4-phosphate and phosphoenolpyruvate: step 5/7. Catalyzes the specific phosphorylation of the 3-hydroxyl group of shikimic acid using ATP as a cosubstrate. The sequence is that of Shikimate kinase from Nostoc sp. (strain PCC 7120 / SAG 25.82 / UTEX 2576).